Reading from the N-terminus, the 570-residue chain is Zinc finger and BTB domain-containing protein 44 (570 aa).

Residue Lys-4 forms a Glycyl lysine isopeptide (Lys-Gly) (interchain with G-Cter in SUMO2) linkage. A BTB domain is found at 31–98 (CDITIRVQDK…AYTATLSINT (68 aa)). Residues Ser-135, Ser-159, Ser-161, Ser-165, Ser-191, and Ser-194 each carry the phosphoserine modification. Disordered regions lie at residues 194-220 (SPVKCGTQTSSPQVLNSSASYSENRNQ) and 243-267 (EKVKQAENTRTLELPGPSETGRRMA). Over residues 199 to 220 (GTQTSSPQVLNSSASYSENRNQ) the composition is skewed to polar residues. Phosphothreonine is present on Thr-200. A Glycyl lysine isopeptide (Lys-Gly) (interchain with G-Cter in SUMO2) cross-link involves residue Lys-290. Positions 295–369 (SDEEVHEEVS…NAPPDDDDRL (75 aa)) are disordered. The span at 304–318 (SQPVSASQSSLSDQQ) shows a compositional bias: low complexity. Polar residues predominate over residues 352 to 361 (TLQSTSSTNA). C2H2-type zinc fingers lie at residues 399-421 (FQCPTCGVRFTRIQNLKQHMLIH), 427-449 (FQCDRCGKKFTRAYSLKMHRLKH), 455-479 (FRCQICSATFTSFGEYKHHMRVSRH), and 487-511 (YECKTCGAMFTNSGNLIVHLRSLNH).

The protein localises to the nucleus. Its function is as follows. May be involved in transcriptional regulation. This chain is Zinc finger and BTB domain-containing protein 44 (ZBTB44), found in Homo sapiens (Human).